The primary structure comprises 437 residues: Dihydrofolate synthase/folylpolyglutamate synthase (437 aa).

28-30 provides a ligand contact to 7,8-dihydropteroate; the sequence is DLG. An ATP-binding site is contributed by 58 to 61; sequence GKGT. S82 provides a ligand contact to Mg(2+). 7,8-dihydropteroate is bound at residue 120–123; sequence TYFE. Residue E144 coordinates Mg(2+). A 7,8-dihydropteroate-binding site is contributed by 151-153; the sequence is LDA. H171 is a binding site for Mg(2+). ATP is bound by residues N255, R287, and D316.

It belongs to the folylpolyglutamate synthase family. Monomer. Mg(2+) serves as cofactor.

The catalysed reaction is 7,8-dihydropteroate + L-glutamate + ATP = 7,8-dihydrofolate + ADP + phosphate + H(+). It catalyses the reaction (6S)-5,6,7,8-tetrahydrofolyl-(gamma-L-Glu)(n) + L-glutamate + ATP = (6S)-5,6,7,8-tetrahydrofolyl-(gamma-L-Glu)(n+1) + ADP + phosphate + H(+). The enzyme catalyses 10-formyltetrahydrofolyl-(gamma-L-Glu)(n) + L-glutamate + ATP = 10-formyltetrahydrofolyl-(gamma-L-Glu)(n+1) + ADP + phosphate + H(+). It carries out the reaction (6R)-5,10-methylenetetrahydrofolyl-(gamma-L-Glu)(n) + L-glutamate + ATP = (6R)-5,10-methylenetetrahydrofolyl-(gamma-L-Glu)(n+1) + ADP + phosphate + H(+). Its pathway is cofactor biosynthesis; tetrahydrofolate biosynthesis; 7,8-dihydrofolate from 2-amino-4-hydroxy-6-hydroxymethyl-7,8-dihydropteridine diphosphate and 4-aminobenzoate: step 2/2. The protein operates within cofactor biosynthesis; tetrahydrofolylpolyglutamate biosynthesis. Its function is as follows. Functions in two distinct reactions of the de novo folate biosynthetic pathway. Catalyzes the addition of a glutamate residue to dihydropteroate (7,8-dihydropteroate or H2Pte) to form dihydrofolate (7,8-dihydrofolate monoglutamate or H2Pte-Glu). Also catalyzes successive additions of L-glutamate to tetrahydrofolate or 10-formyltetrahydrofolate or 5,10-methylenetetrahydrofolate, leading to folylpolyglutamate derivatives. This is Dihydrofolate synthase/folylpolyglutamate synthase (folC) from Haemophilus influenzae (strain ATCC 51907 / DSM 11121 / KW20 / Rd).